The chain runs to 219 residues: 7-cyano-7-deazaguanine synthase (219 aa).

10 to 20 (FSGGQDSTTCL) is a binding site for ATP. The Zn(2+) site is built by Cys186, Cys195, Cys198, and Cys201.

It belongs to the QueC family. In terms of assembly, homodimer. Zn(2+) serves as cofactor.

The catalysed reaction is 7-carboxy-7-deazaguanine + NH4(+) + ATP = 7-cyano-7-deazaguanine + ADP + phosphate + H2O + H(+). Its pathway is purine metabolism; 7-cyano-7-deazaguanine biosynthesis. Catalyzes the ATP-dependent conversion of 7-carboxy-7-deazaguanine (CDG) to 7-cyano-7-deazaguanine (preQ(0)). This Bacillus licheniformis (strain ATCC 14580 / DSM 13 / JCM 2505 / CCUG 7422 / NBRC 12200 / NCIMB 9375 / NCTC 10341 / NRRL NRS-1264 / Gibson 46) protein is 7-cyano-7-deazaguanine synthase.